The primary structure comprises 253 residues: Phosphoadenosine 5'-phosphosulfate reductase (253 aa).

C239 (nucleophile; cysteine thiosulfonate intermediate) is an active-site residue.

The protein belongs to the PAPS reductase family. CysH subfamily.

It localises to the cytoplasm. The enzyme catalyses [thioredoxin]-disulfide + sulfite + adenosine 3',5'-bisphosphate + 2 H(+) = [thioredoxin]-dithiol + 3'-phosphoadenylyl sulfate. Its pathway is sulfur metabolism; hydrogen sulfide biosynthesis; sulfite from sulfate: step 3/3. Its function is as follows. Catalyzes the formation of sulfite from phosphoadenosine 5'-phosphosulfate (PAPS) using thioredoxin as an electron donor. This chain is Phosphoadenosine 5'-phosphosulfate reductase, found in Aliivibrio fischeri (strain MJ11) (Vibrio fischeri).